A 1012-amino-acid polypeptide reads, in one-letter code: Beta-alanine-activating enzyme (1012 aa).

Residues 177-185, aspartate 411, arginine 426, and lysine 516 contribute to the ATP site; that span reads TTGTTGKPK.

This sequence belongs to the ATP-dependent AMP-binding enzyme family.

Covalently binds beta-alanine in an ATP-dependent manner to form a thioester bond with its phosphopantetheine group and transfers it to an, as yet, unknown acceptor. May be required for a post-translational protein modification or for post-transcriptional modification of an RNA. The chain is Beta-alanine-activating enzyme from Drosophila melanogaster (Fruit fly).